A 441-amino-acid polypeptide reads, in one-letter code: Anti-sigma-I factor RsgI (441 aa).

Over 1–53 the chain is Cytoplasmic; that stretch reads MMNKGIVMDIKKHSVVVLTPNGEFITCKRKGDSCMIGEEISFDEQEQKASRFS. A RsgI N-terminal anti-sigma domain is found at 3–51; that stretch reads NKGIVMDIKKHSVVVLTPNGEFITCKRKGDSCMIGEEISFDEQEQKASR. A helical membrane pass occupies residues 54 to 76; that stretch reads IPYFLKPASLLVACFLCALLFFY. Topologically, residues 77–441 are extracellular; that stretch reads NQPEEKVFAY…HQQGNEKKNQ (365 aa). Residues 213–441 form a disordered region; the sequence is ENEKNKSVTP…HQQGNEKKNQ (229 aa). Residues 219–230 show a composition bias toward polar residues; sequence SVTPPATPSNPV. Residues 240-251 are compositionally biased toward low complexity; the sequence is PDSSPDVVPDLS. Positions 252–281 are enriched in basic and acidic residues; the sequence is SVKDKKYEKPEYKEQKKIEEQPTKQIKENN. 3 stretches are compositionally biased toward low complexity: residues 282–328, 336–358, and 366–408; these read GRGS…QQGN, NNGHQQENNGRGSQGNNGNQQGN, and NNGH…NGRG. Residues 411-428 are compositionally biased toward polar residues; that stretch reads KENVGNEQGNNGRGSQQE. A compositionally biased stretch (basic and acidic residues) spans 429–441; that stretch reads NRGHQQGNEKKNQ.

As to quaternary structure, interacts (via RsgI N-terminal anti-sigma domain) with SigI.

It is found in the cell membrane. Functionally, anti-sigma factor for SigI. Negatively regulates SigI activity through direct interaction. Has no direct effect on virulence gene expression. This chain is Anti-sigma-I factor RsgI, found in Bacillus anthracis.